The primary structure comprises 984 residues: Calsyntenin-1 (984 aa).

The N-terminal stretch at 1–18 (MRTAYFIFVGALLGVSYA) is a signal peptide. Residues 19–850 (KHHHAARAPI…VGQGAIAGGA (832 aa)) are Extracellular-facing. 2 consecutive Cadherin domains span residues 66–142 (YLLT…APEI) and 143–257 (ENPW…APGV). Residues N206 and N305 are each glycosylated (N-linked (GlcNAc...) asparagine). A helical membrane pass occupies residues 851–871 (VAVVVVVCVGFLLVLLVIGVL). The Cytoplasmic segment spans residues 872–984 (KMRDTPMPRR…ISTNARSYRV (113 aa)). The interval 878–959 (MPRRRRQKRQ…QTEVLPHLDA (82 aa)) is disordered. A compositionally biased stretch (basic and acidic residues) spans 886 to 896 (RQSDGGMHWDD). The segment covering 918–951 (EFSDEEEEEETDGESECSYRDEEDDVSEDEEDQT) has biased composition (acidic residues).

It belongs to the calsyntenin family. Interacts with isoform c of daf-2 (daf-2c); promoting daf-2c localization to synaptic regions. Interacts with klc-2. Interacts with unc-104. Post-translationally, a proportion of the protein is proteolytically cleaved before the transmembrane domain in neurons, leading to release in the extracellular space. Widely expressed in the nervous system. Highly expressed in many head neurons, including most amphid sensory neurons. Also expressed in other tissues, such as intestine and gonadal sheath cells.

Its subcellular location is the golgi apparatus membrane. The protein resides in the perikaryon. The protein localises to the cell projection. It localises to the axon. It is found in the secreted. Its subcellular location is the synaptic cleft. Functionally, cell adhesion molecule involved in associative learning and memory. Acts as a regulator of GABAergic synaptic transmission at neuromuscular junctions by regulating GABA synaptic vesicle precursor transport: possibly functions as a cargo adapter for unc-104-mediated transport of synaptic vesicle precursors. Promotes localization of isoform c of daf-2 (daf-2c) to synaptic regions by acting as a signaling adapter between klc-2 and daf-2c. Its function is as follows. Acts as aregulator of glutamate signaling in the sensory neurons by inhibiting the activity of command interneurons, thereby negatively regulating motor circuit activity and locomotion. In Caenorhabditis elegans, this protein is Calsyntenin-1.